Reading from the N-terminus, the 309-residue chain is ATP synthase gamma chain (309 aa).

The protein belongs to the ATPase gamma chain family. In terms of assembly, F-type ATPases have 2 components, CF(1) - the catalytic core - and CF(0) - the membrane proton channel. CF(1) has five subunits: alpha(3), beta(3), gamma(1), delta(1), epsilon(1). CF(0) has three main subunits: a, b and c.

It is found in the cell membrane. Functionally, produces ATP from ADP in the presence of a proton gradient across the membrane. The gamma chain is believed to be important in regulating ATPase activity and the flow of protons through the CF(0) complex. This chain is ATP synthase gamma chain, found in Salinispora tropica (strain ATCC BAA-916 / DSM 44818 / JCM 13857 / NBRC 105044 / CNB-440).